Here is a 764-residue protein sequence, read N- to C-terminus: FAST kinase domain-containing protein 5, mitochondrial (764 aa).

Residues 1–27 (MAATLKSLKLLRYQAFCSPSAFGAVRS) constitute a mitochondrion transit peptide. The tract at residues 68–94 (IPTTSSARPGLEFSKTSSSKASTLQLG) is disordered. Positions 81-93 (SKTSSSKASTLQL) are enriched in polar residues. Position 95 is a phosphoserine (Ser95). Lys507 is subject to N6-acetyllysine. The region spanning 697–757 (LAIQFTNRNQ…RLEKLAFLHE (61 aa)) is the RAP domain.

The protein belongs to the FAST kinase family. Found in a complex with GRSF1, DDX28, DHX30 and FASTKD2. Associates with the 12S mitochondrial rRNA (12S mt-rRNA).

The protein localises to the mitochondrion matrix. It is found in the mitochondrion nucleoid. Plays an important role in the processing of non-canonical mitochondrial mRNA precursors. The polypeptide is FAST kinase domain-containing protein 5, mitochondrial (FASTKD5) (Pongo abelii (Sumatran orangutan)).